Here is a 119-residue protein sequence, read N- to C-terminus: Large ribosomal subunit protein bL20 (119 aa).

This sequence belongs to the bacterial ribosomal protein bL20 family.

In terms of biological role, binds directly to 23S ribosomal RNA and is necessary for the in vitro assembly process of the 50S ribosomal subunit. It is not involved in the protein synthesizing functions of that subunit. This chain is Large ribosomal subunit protein bL20, found in Acidovorax sp. (strain JS42).